The primary structure comprises 191 residues: Ribonuclease HII (191 aa).

Positions 7-191 (ILMAGVDEVG…YSPVADLISK (185 aa)) constitute an RNase H type-2 domain. 3 residues coordinate a divalent metal cation: aspartate 13, glutamate 14, and aspartate 103.

The protein belongs to the RNase HII family. Mn(2+) is required as a cofactor. Mg(2+) serves as cofactor.

The protein localises to the cytoplasm. It carries out the reaction Endonucleolytic cleavage to 5'-phosphomonoester.. Functionally, endonuclease that specifically degrades the RNA of RNA-DNA hybrids. This chain is Ribonuclease HII, found in Legionella pneumophila (strain Paris).